The following is a 390-amino-acid chain: Elongation factor Ts, mitochondrial (390 aa).

It belongs to the EF-Ts family.

Its subcellular location is the mitochondrion. In terms of biological role, associates with the EF-Tu.GDP complex and induces the exchange of GDP to GTP. It remains bound to the aminoacyl-tRNA.EF-Tu.GTP complex up to the GTP hydrolysis stage on the ribosome. The chain is Elongation factor Ts, mitochondrial from Plasmodium falciparum (isolate 3D7).